The sequence spans 150 residues: Endoribonuclease YbeY (150 aa).

Zn(2+) is bound by residues His-112, His-116, and His-122.

The protein belongs to the endoribonuclease YbeY family. The cofactor is Zn(2+).

Its subcellular location is the cytoplasm. Single strand-specific metallo-endoribonuclease involved in late-stage 70S ribosome quality control and in maturation of the 3' terminus of the 16S rRNA. The sequence is that of Endoribonuclease YbeY from Bdellovibrio bacteriovorus (strain ATCC 15356 / DSM 50701 / NCIMB 9529 / HD100).